The primary structure comprises 415 residues: MSYYIAPRFLDKLAVHITKNFLNLPGVRVPLILGIHGRKGEGKTFQCELAFEKMGVEVTLISGGELESPDAGDPARLIRLRYRETAELIKVRGKMCVLMINDLDAGAGRFDEGTQYTVNTQLVNATLMNIADNPTDVQLPGSYDSTPLRRVPIIVTGNDFSTLYAPLIRDGRMEKFYWEPHRDEKVGIVGGIFAEDGLSQRDVEKLVDSFPNQSIDFFSALRSRIYDEQIRDFIHQVGYENVSLRVVNSLEGPPAFKKPDFTLSHLIESANFMVAEQKRIETSQLVDEYNRLNRGRSYQPASPVAEIATSQPSPNGVNQPQSASPHISLETQEQIRQILAQGHKITFEHVDNRRFRTGSWQSCGTIHVDAESDAISTLESCLAEYRGEYVRLVGIDPKAKRRVVETIIQRPNGTN.

37 to 44 (GRKGEGKT) contributes to the ATP binding site.

Belongs to the RuBisCO activase family.

In terms of biological role, activation of RuBisCO (ribulose-1,5-bisohosphate carboxylase/oxygenase; EC 4.1.1.39) involves the ATP-dependent carboxylation of the epsilon-amino group of lysine leading to a carbamate structure. In Anabaena sp. (strain CA / ATCC 33047), this protein is Ribulose bisphosphate carboxylase/oxygenase activase (rca).